We begin with the raw amino-acid sequence, 50 residues long: Protein hunchback (50 aa).

C2H2-type zinc fingers lie at residues 1–5 (HIRNH), 11–33 (FKCNKCSYSCVNKSMLNSHLKSH), and 39–50 (YRCADCAYATKY).

Belongs to the hunchback C2H2-type zinc-finger protein family.

It is found in the nucleus. Its function is as follows. Gap class segmentation protein that controls development of head structures. This is Protein hunchback (hb) from Schultesia lampyridiformis (Firefly mimic roach).